The following is a 699-amino-acid chain: Keratinocyte proline-rich protein (699 aa).

The residue at position 436 (Ser436) is a Phosphoserine. 2 stretches are compositionally biased toward pro residues: residues 448–477 (PYPRPEPCPSPEPRPCPRPRPRPEPCPSPE) and 513–533 (DPCPSPEPRPRPCPEPCPSPE). A disordered region spans residues 448-533 (PYPRPEPCPS…PCPEPCPSPE (86 aa)).

As to expression, expressed in the stratified squamous epithelial layers of the skin, esophagus and tongue.

It is found in the cytoplasm. The protein is Keratinocyte proline-rich protein (Kprp) of Rattus norvegicus (Rat).